A 315-amino-acid chain; its full sequence is tRNA dimethylallyltransferase (315 aa).

10–17 (GPTAVGKT) serves as a coordination point for ATP. 12 to 17 (TAVGKT) contributes to the substrate binding site. The interaction with substrate tRNA stretch occupies residues 35 to 38 (DSMQ).

It belongs to the IPP transferase family. As to quaternary structure, monomer. The cofactor is Mg(2+).

It catalyses the reaction adenosine(37) in tRNA + dimethylallyl diphosphate = N(6)-dimethylallyladenosine(37) in tRNA + diphosphate. Catalyzes the transfer of a dimethylallyl group onto the adenine at position 37 in tRNAs that read codons beginning with uridine, leading to the formation of N6-(dimethylallyl)adenosine (i(6)A). The protein is tRNA dimethylallyltransferase of Geobacillus kaustophilus (strain HTA426).